Consider the following 336-residue polypeptide: 4-hydroxy-3-methylbut-2-enyl diphosphate reductase (336 aa).

Position 21 (C21) interacts with [4Fe-4S] cluster. H50 and H86 together coordinate (2E)-4-hydroxy-3-methylbut-2-enyl diphosphate. Residues H50 and H86 each coordinate dimethylallyl diphosphate. Isopentenyl diphosphate is bound by residues H50 and H86. C108 is a [4Fe-4S] cluster binding site. Residue H136 coordinates (2E)-4-hydroxy-3-methylbut-2-enyl diphosphate. A dimethylallyl diphosphate-binding site is contributed by H136. H136 contributes to the isopentenyl diphosphate binding site. The active-site Proton donor is the E138. T177 contacts (2E)-4-hydroxy-3-methylbut-2-enyl diphosphate. A [4Fe-4S] cluster-binding site is contributed by C207. S235, S236, N237, and S280 together coordinate (2E)-4-hydroxy-3-methylbut-2-enyl diphosphate. S235, S236, N237, and S280 together coordinate dimethylallyl diphosphate. The isopentenyl diphosphate site is built by S235, S236, N237, and S280.

This sequence belongs to the IspH family. The cofactor is [4Fe-4S] cluster.

The enzyme catalyses isopentenyl diphosphate + 2 oxidized [2Fe-2S]-[ferredoxin] + H2O = (2E)-4-hydroxy-3-methylbut-2-enyl diphosphate + 2 reduced [2Fe-2S]-[ferredoxin] + 2 H(+). It catalyses the reaction dimethylallyl diphosphate + 2 oxidized [2Fe-2S]-[ferredoxin] + H2O = (2E)-4-hydroxy-3-methylbut-2-enyl diphosphate + 2 reduced [2Fe-2S]-[ferredoxin] + 2 H(+). It functions in the pathway isoprenoid biosynthesis; dimethylallyl diphosphate biosynthesis; dimethylallyl diphosphate from (2E)-4-hydroxy-3-methylbutenyl diphosphate: step 1/1. The protein operates within isoprenoid biosynthesis; isopentenyl diphosphate biosynthesis via DXP pathway; isopentenyl diphosphate from 1-deoxy-D-xylulose 5-phosphate: step 6/6. Catalyzes the conversion of 1-hydroxy-2-methyl-2-(E)-butenyl 4-diphosphate (HMBPP) into a mixture of isopentenyl diphosphate (IPP) and dimethylallyl diphosphate (DMAPP). Acts in the terminal step of the DOXP/MEP pathway for isoprenoid precursor biosynthesis. The chain is 4-hydroxy-3-methylbut-2-enyl diphosphate reductase from Mesorhizobium japonicum (strain LMG 29417 / CECT 9101 / MAFF 303099) (Mesorhizobium loti (strain MAFF 303099)).